The sequence spans 292 residues: NAD kinase (292 aa).

Catalysis depends on D72, which acts as the Proton acceptor. NAD(+)-binding positions include 72 to 73 (DG), 146 to 147 (NE), H157, R174, D176, and 187 to 192 (TAYSLS).

Belongs to the NAD kinase family. A divalent metal cation serves as cofactor.

The protein localises to the cytoplasm. The catalysed reaction is NAD(+) + ATP = ADP + NADP(+) + H(+). Involved in the regulation of the intracellular balance of NAD and NADP, and is a key enzyme in the biosynthesis of NADP. Catalyzes specifically the phosphorylation on 2'-hydroxyl of the adenosine moiety of NAD to yield NADP. This chain is NAD kinase, found in Shewanella loihica (strain ATCC BAA-1088 / PV-4).